A 1036-amino-acid chain; its full sequence is Multiple C2 domain and transmembrane region protein 2 (1036 aa).

The C2 1 domain occupies Met1–Phe110. 2 disordered regions span residues Asp137–Lys204 and Arg225–Asn246. A compositionally biased stretch (polar residues) spans Pro146–Ala155. Residues Thr158–Glu168 show a composition bias toward acidic residues. The span at Val190 to Lys204 shows a compositional bias: basic and acidic residues. C2 domains follow at residues Pro277 to Tyr399, Val440 to Phe563, and Tyr607 to Phe734. The Ca(2+) site is built by Asp316, Asp364, Glu366, and Asp372. 2 helical membrane-spanning segments follow: residues Phe871–Ile891 and Leu979–Ile999.

The protein belongs to the MCTP family. Ca(2+) serves as cofactor. Expressed in the vascular tissues of roots and rosette leaves. Accumulates in roots meristems. Observed in flowers.

It is found in the cell membrane. Functionally, may function as a signaling molecule by regulating the trafficking of other regulators. This is Multiple C2 domain and transmembrane region protein 2 from Arabidopsis thaliana (Mouse-ear cress).